The following is a 734-amino-acid chain: Predicted GPI-anchored protein 49 (734 aa).

A signal peptide spans 1–16; sequence MNYITSLLLLSSNTFL. 4 N-linked (GlcNAc...) asparagine glycosylation sites follow: Asn-27, Asn-56, Asn-68, and Asn-71. The segment at 78 to 145 is disordered; it reads DNSDTDIDDS…NESDTQNEND (68 aa). The segment covering 87–98 has biased composition (low complexity); it reads SSSNSEDVSSND. Residues Asn-105, Asn-118, Asn-136, and Asn-180 are each glycosylated (N-linked (GlcNAc...) asparagine). Acidic residues predominate over residues 110-129; sequence FSDESDEGNDSDDNGDEVEN. Residues 130-141 are compositionally biased toward polar residues; sequence MENNQANESDTQ. Disordered regions lie at residues 216–262 and 331–360; these read SPKS…LKSK and DANP…RLPT. The span at 228 to 259 shows a compositional bias: basic residues; the sequence is SRKKTLKSKSKSKSSKLKHKSRKSHKRRPKLL. N-linked (GlcNAc...) asparagine glycosylation is found at Asn-388 and Asn-427. Positions 447–479 are disordered; sequence PPRYSNHHSEFTVERPPRPSRTKKRPRIKAKKT. Residues 453–463 show a composition bias toward basic and acidic residues; it reads HHSEFTVERPP. Residues 464–479 show a composition bias toward basic residues; it reads RPSRTKKRPRIKAKKT. N-linked (GlcNAc...) asparagine glycosylation is present at Asn-517. Residues 582 to 653 form a disordered region; sequence KPQETKLHSP…STTSTKPNDQ (72 aa). Positions 592-611 are enriched in low complexity; that stretch reads TSTDTKSSKLMSSSSSNNNK. Residues 620–631 show a composition bias toward polar residues; that stretch reads EYNQTQESTSYN. Residues Asn-622 and Asn-631 are each glycosylated (N-linked (GlcNAc...) asparagine). Over residues 632 to 650 the composition is skewed to low complexity; the sequence is TTKAVPKTSVVSSTTSTKP. A lipid anchor (GPI-anchor amidated serine) is attached at Ser-707. Residues 708–734 constitute a propeptide, removed in mature form; sequence ASQNLSFSVLGLIILLLLLPGLLIIIM. Asn-711 carries an N-linked (GlcNAc...) asparagine glycan.

It localises to the cell membrane. The sequence is that of Predicted GPI-anchored protein 49 (PGA49) from Candida albicans (strain SC5314 / ATCC MYA-2876) (Yeast).